The primary structure comprises 562 residues: Ikaros family zinc finger protein (562 aa).

3 consecutive C2H2-type zinc fingers follow at residues 45–67 (IKCEECGLICAGQSHYNVHIRSH), 73–95 (FKCHICGVAFTQKGNLRRHYKIH), and 101–123 (FQCPICSYRCRRRDALNGHMRIH). The C2H2-type 4; degenerate zinc finger occupies 129–152 (YRCSYCARSYKSRQSMKEHEYQCP). Disordered stretches follow at residues 178 to 210 (NPLALPGPRPSTSQPAPVLSQLGQLGARPPPYP), 293 to 342 (QNQQ…VKPT), 361 to 404 (QLED…KEDD), and 451 to 473 (DESKNEISSVDSRSPLDQSSTQD). Positions 307–326 (PSLSEATPSSHSSHSSAEDS) are enriched in low complexity. The segment covering 327–336 (GQVNKFSPTE) has biased composition (polar residues). A compositionally biased stretch (basic and acidic residues) spans 369-383 (DSRKRPHSFESEPTP). Polar residues predominate over residues 456–471 (EISSVDSRSPLDQSST). C2H2-type zinc fingers lie at residues 494–516 (WECKTCNCIFLNEITYRIHMGVH) and 522–546 (LVCNSCGKRCSDQQEFQAHLVHHQH).

Belongs to the Ikaros C2H2-type zinc-finger protein family. As to expression, expression is strongest in the anterior Fol cells of the oikoplastic epithelium.

The protein resides in the nucleus. The polypeptide is Ikaros family zinc finger protein (Oikopleura dioica (Tunicate)).